Here is a 270-residue protein sequence, read N- to C-terminus: Replication protein A 32 kDa subunit (270 aa).

At Met-1 the chain carries N-acetylmethionine. A phosphoserine; by PRKDC mark is found at Ser-4 and Ser-8. Thr-21 carries the post-translational modification Phosphothreonine; by PRKDC. The tract at residues 22 to 41 is disordered; it reads QSPGGFGSPTPSQAEKKSRA. Residue Ser-23 is modified to Phosphoserine; by CDK2. Residue Ser-29 is modified to Phosphoserine; by CDK1. Residue Ser-33 is modified to Phosphoserine; by PRKDC. Glycyl lysine isopeptide (Lys-Gly) (interchain with G-Cter in ubiquitin) cross-links involve residues Lys-37 and Lys-38. Residues 74-148 constitute a DNA-binding region (OB); that stretch reads VTIVGIIRHA…KSLVAFKIIP (75 aa). The interval 187 to 270 is interaction with RAD52, TIPIN, UNG and XPA; the sequence is GMGEPGNFSG…DDHFKSTDAE (84 aa).

This sequence belongs to the replication factor A protein 2 family. As to quaternary structure, component of the replication protein A complex (RPA/RP-A), a heterotrimeric complex composed of RPA1, RPA2 and RPA3. Interacts with PRPF19; the PRP19-CDC5L complex is recruited to the sites of DNA repair where it ubiquitinates the replication protein A complex (RPA). Interacts with SERTAD3. Interacts with TIPIN. Interacts with TIMELESS. Interacts with PPP4R2; the interaction is direct, DNA damage-dependent and mediates the recruitment of the PP4 catalytic subunit PPP4C. Interacts (hyperphosphorylated) with RAD51. Interacts with SMARCAL1; the interaction is direct and mediates the recruitment to the RPA complex of SMARCAL1. Interacts with RAD52 and XPA; those interactions are direct and associate RAD52 and XPA to the RPA complex. Interacts with FBH1. Interacts with ETAA1; the interaction is direct and promotes ETAA1 recruitment at stalled replication forks. Interacts with DDI2. Interacts (in unphosphorylated form via N-terminus) with EIF4EBP3; the interaction enhances EIF4EBP3-mediated inhibition of EIF4E-mediated mRNA nuclear export. Interacts with nuclear UNG (isoform 2); this interaction mediates UNG recruitment to RPA-coated single-stranded DNA at stalled replication forks. Post-translationally, differentially phosphorylated throughout the cell cycle, becoming phosphorylated at the G1-S transition and dephosphorylated in late mitosis. Mainly phosphorylated at Ser-23 and Ser-29, by cyclin A-CDK2 and cyclin B-CDK1, respectively during DNA replication and mitosis. Dephosphorylation may require the serine/threonine-protein phosphatase 4. Phosphorylation at Ser-23 and Ser-29 is a prerequisite for further phosphorylation. Becomes hyperphosphorylated on additional residues including Ser-4, Ser-8, Thr-21 and Ser-33 in response to DNA damage. Hyperphosphorylation is mediated by ATM, ATR and PRKDC. Primarily recruited to DNA repair nuclear foci as a hypophosphorylated form it undergoes subsequent hyperphosphorylation, catalyzed by ATR. Hyperphosphorylation is required for RAD51 recruitment to chromatin and efficient DNA repair. Phosphorylation at Thr-21 depends upon RFWD3 presence. DNA damage-induced 'Lys-63'-linked polyubiquitination by PRPF19 mediates ATRIP recruitment to the RPA complex at sites of DNA damage and activation of ATR. Ubiquitinated by RFWD3 at stalled replication forks in response to DNA damage: ubiquitination by RFWD3 does not lead to degradation by the proteasome and promotes removal of the RPA complex from stalled replication forks, promoting homologous recombination.

Its subcellular location is the nucleus. The protein localises to the PML body. Its function is as follows. As part of the heterotrimeric replication protein A complex (RPA/RP-A), binds and stabilizes single-stranded DNA intermediates, that form during DNA replication or upon DNA stress. It prevents their reannealing and in parallel, recruits and activates different proteins and complexes involved in DNA metabolism. Thereby, it plays an essential role both in DNA replication and the cellular response to DNA damage. In the cellular response to DNA damage, the RPA complex controls DNA repair and DNA damage checkpoint activation. Through recruitment of ATRIP activates the ATR kinase a master regulator of the DNA damage response. It is required for the recruitment of the DNA double-strand break repair factors RAD51 and RAD52 to chromatin in response to DNA damage. Also recruits to sites of DNA damage proteins like XPA and XPG that are involved in nucleotide excision repair and is required for this mechanism of DNA repair. Also plays a role in base excision repair (BER) probably through interaction with UNG. Also recruits SMARCAL1/HARP, which is involved in replication fork restart, to sites of DNA damage. May also play a role in telomere maintenance. This is Replication protein A 32 kDa subunit (Rpa2) from Rattus norvegicus (Rat).